The primary structure comprises 1159 residues: WASH complex subunit 5 (1159 aa).

The residue at position 917 (serine 917) is a Phosphoserine.

This sequence belongs to the strumpellin family. In terms of assembly, component of the WASH core complex also described as WASH regulatory complex (SHRC) composed of WASH (WASHC1, WASH2P or WASH3P), WASHC2 (WASHC2A or WASHC2C), WASHC3, WASHC4 and WASHC5. The WASH core complex associates via WASHC2 with the F-actin-capping protein dimer (formed by CAPZA1, CAPZA2 or CAPZA3 and CAPZB) in a transient or substoichiometric manner which was initially described as WASH complex. Interacts with VCP, PI4K2A. In terms of tissue distribution, expressed ubiquitously.

Its subcellular location is the cytoplasm. The protein resides in the cytosol. It is found in the endoplasmic reticulum. It localises to the early endosome. Acts as a component of the WASH core complex that functions as a nucleation-promoting factor (NPF) at the surface of endosomes, where it recruits and activates the Arp2/3 complex to induce actin polymerization, playing a key role in the fission of tubules that serve as transport intermediates during endosome sorting. May be involved in axonal outgrowth. Involved in cellular localization of ADRB2. Involved in cellular trafficking of BLOC-1 complex cargos such as ATP7A and VAMP7. The sequence is that of WASH complex subunit 5 from Homo sapiens (Human).